The sequence spans 63 residues: Cytotoxin homolog S3C2 (63 aa).

Cystine bridges form between C3–C22, C15–C40, C44–C55, and C56–C61.

This sequence belongs to the three-finger toxin family. Short-chain subfamily. Orphan group XVI sub-subfamily. As to expression, expressed by the venom gland.

The protein resides in the secreted. This Aspidelaps scutatus (Shield-nose snake) protein is Cytotoxin homolog S3C2.